The primary structure comprises 187 residues: uncharacterized protein (187 aa).

This sequence belongs to the isochorismatase family.

This is an uncharacterized protein from Bacillus subtilis (strain 168).